Here is a 407-residue protein sequence, read N- to C-terminus: BTB/POZ and MATH domain-containing protein 1 (407 aa).

The 135-residue stretch at 33 to 167 (NGFHEFKICG…ENSLLVRCRV (135 aa)) folds into the MATH domain. In terms of domain architecture, BTB spans 203-270 (CDVVFQVDGE…IYWDELPDMQ (68 aa)).

The protein belongs to the Tdpoz family. As to quaternary structure, homodimer or heterodimer with BPM3, BPM5 and BPM6. Interacts with CUL3A and CUL3B. Interacts with RAP2-4 and RAP2-13. Binds to MYB56 at the promoter of FLOWERING LOCUS T (FT). As to expression, ubiquitous.

It localises to the nucleus. The protein operates within protein modification; protein ubiquitination. Functionally, may act as a substrate-specific adapter of an E3 ubiquitin-protein ligase complex (CUL3-RBX1-BTB) which mediates the ubiquitination and subsequent proteasomal degradation of target proteins. The sequence is that of BTB/POZ and MATH domain-containing protein 1 (BPM1) from Arabidopsis thaliana (Mouse-ear cress).